A 262-amino-acid polypeptide reads, in one-letter code: Ornithine carbamoyltransferase (262 aa).

Carbamoyl phosphate contacts are provided by residues 3–7 (STRTR), Q30, R54, and 81–84 (HPTQ). Residues N114, D178, and 182–183 (SM) each bind L-ornithine. Residues 219 to 222 (HCLP) and T247 contribute to the carbamoyl phosphate site.

This sequence belongs to the aspartate/ornithine carbamoyltransferase superfamily. OTCase family.

The protein resides in the cytoplasm. The catalysed reaction is carbamoyl phosphate + L-ornithine = L-citrulline + phosphate + H(+). It participates in amino-acid biosynthesis; L-arginine biosynthesis; L-arginine from L-ornithine and carbamoyl phosphate: step 1/3. In Neisseria cinerea, this protein is Ornithine carbamoyltransferase (argF).